We begin with the raw amino-acid sequence, 149 residues long: Protein SprT-like (149 aa).

The 142-residue stretch at 6 to 147 folds into the SprT-like domain; sequence LQALVEQISI…VCGRCRSKLK (142 aa). His67 contacts Zn(2+). Residue Glu68 is part of the active site. His71 lines the Zn(2+) pocket.

It belongs to the SprT family. The cofactor is Zn(2+).

It localises to the cytoplasm. The chain is Protein SprT-like from Geobacillus kaustophilus (strain HTA426).